The following is a 207-amino-acid chain: uncharacterized protein (207 aa).

The N-terminal stretch at 1-19 (MRFNVSFLLSLLLPTLAFA) is a signal peptide.

To P.multocida PM1509.

This is an uncharacterized protein from Pasteurella multocida (strain Pm70).